The sequence spans 143 residues: 5-hydroxymethyl-dUMP N-hydrolase (143 aa).

8 residues coordinate 5-hydroxymethyl-dUMP: glycine 7, isoleucine 9, arginine 10, glycine 11, serine 77, glycine 79, glutamate 83, and serine 107.

Belongs to the 2'-deoxynucleoside 5'-phosphate N-hydrolase 1 family. Monomer and homodimer.

Its subcellular location is the cytoplasm. The protein resides in the nucleus. The catalysed reaction is 5-hydroxymethyl-dUMP + H2O = 5-hydroxymethyluracil + 2-deoxy-D-ribose 5-phosphate. Part of a nucleotide salvage pathway that eliminates epigenetically modified 5-hydroxymethyl-dCMP (hmdCMP) in a two-step process entailing deamination to cytotoxic 5-hydroxymethyl-dUMP (hmdUMP), followed by its hydrolysis into 5-hydroxymethyluracil (hmU) and 2-deoxy-D-ribose 5-phosphate (deoxyribosephosphate). This is 5-hydroxymethyl-dUMP N-hydrolase (dnph1) from Danio rerio (Zebrafish).